The sequence spans 358 residues: NADH-quinone oxidoreductase subunit H (358 aa).

8 consecutive transmembrane segments (helical) span residues 20-40 (ITVGLVVSVIVKIVIILIPLI), 95-115 (ALFYIGPIMSLAPSFAAWAVI), 128-148 (IGLLYILMITSLSVYGVIIAG), 168-188 (ISYEIAMSAALVCVVMVSGSM), 206-226 (VFSWNWLPLFPIFIVYLISAV), 253-273 (GFAFALFFLAEYIFMILIAAL), 295-315 (TPSAFWMFVKMAAVLYWYLWI), and 334-354 (VLIPIGFAYIVVLGVWMISPL).

Belongs to the complex I subunit 1 family. As to quaternary structure, NDH-1 is composed of 14 different subunits. Subunits NuoA, H, J, K, L, M, N constitute the membrane sector of the complex.

The protein resides in the cell inner membrane. It catalyses the reaction a quinone + NADH + 5 H(+)(in) = a quinol + NAD(+) + 4 H(+)(out). Functionally, NDH-1 shuttles electrons from NADH, via FMN and iron-sulfur (Fe-S) centers, to quinones in the respiratory chain. The immediate electron acceptor for the enzyme in this species is believed to be ubiquinone. Couples the redox reaction to proton translocation (for every two electrons transferred, four hydrogen ions are translocated across the cytoplasmic membrane), and thus conserves the redox energy in a proton gradient. This subunit may bind ubiquinone. The protein is NADH-quinone oxidoreductase subunit H of Neisseria gonorrhoeae (strain ATCC 700825 / FA 1090).